The chain runs to 62 residues: UPF0339 protein Atu5359 (62 aa).

This sequence belongs to the UPF0339 family.

The sequence is that of UPF0339 protein Atu5359 from Agrobacterium fabrum (strain C58 / ATCC 33970) (Agrobacterium tumefaciens (strain C58)).